A 160-amino-acid chain; its full sequence is Ribosomal RNA large subunit methyltransferase H (160 aa).

Residues leucine 76, glycine 108, and 127-132 contribute to the S-adenosyl-L-methionine site; that span reads LGKMTW.

Belongs to the RNA methyltransferase RlmH family. Homodimer.

The protein resides in the cytoplasm. It catalyses the reaction pseudouridine(1915) in 23S rRNA + S-adenosyl-L-methionine = N(3)-methylpseudouridine(1915) in 23S rRNA + S-adenosyl-L-homocysteine + H(+). Specifically methylates the pseudouridine at position 1915 (m3Psi1915) in 23S rRNA. The polypeptide is Ribosomal RNA large subunit methyltransferase H (Sinorhizobium medicae (strain WSM419) (Ensifer medicae)).